The primary structure comprises 399 residues: Chalcone synthase 2 (399 aa).

The active site involves cysteine 166.

Belongs to the thiolase-like superfamily. Chalcone/stilbene synthases family.

It catalyses the reaction (E)-4-coumaroyl-CoA + 3 malonyl-CoA + 3 H(+) = 2',4,4',6'-tetrahydroxychalcone + 3 CO2 + 4 CoA. Its pathway is secondary metabolite biosynthesis; flavonoid biosynthesis. In terms of biological role, the primary product of this enzyme is 4,2',4',6'-tetrahydroxychalcone (also termed naringenin-chalcone or chalcone) which can under specific conditions spontaneously isomerize into naringenin. Substrate preference is feruloyl-CoA = caffeoyl-CoA &gt;&gt; cinnamoyl-CoA. The polypeptide is Chalcone synthase 2 (CHS2) (Hordeum vulgare (Barley)).